We begin with the raw amino-acid sequence, 339 residues long: DNA-directed RNA polymerase subunit alpha (339 aa).

The segment at 1 to 233 (MVREEIAVAT…DLFIPFLHAE (233 aa)) is alpha N-terminal domain (alpha-NTD). Residues 267–339 (KKMALKSIFI…FGFDLPKNGK (73 aa)) are alpha C-terminal domain (alpha-CTD).

The protein belongs to the RNA polymerase alpha chain family. In terms of assembly, in plastids the minimal PEP RNA polymerase catalytic core is composed of four subunits: alpha, beta, beta', and beta''. When a (nuclear-encoded) sigma factor is associated with the core the holoenzyme is formed, which can initiate transcription.

It is found in the plastid. The protein resides in the chloroplast. The enzyme catalyses RNA(n) + a ribonucleoside 5'-triphosphate = RNA(n+1) + diphosphate. Its function is as follows. DNA-dependent RNA polymerase catalyzes the transcription of DNA into RNA using the four ribonucleoside triphosphates as substrates. The chain is DNA-directed RNA polymerase subunit alpha from Piper cenocladum (Ant piper).